Consider the following 364-residue polypeptide: Mannitol-1-phosphate 5-dehydrogenase (364 aa).

6-17 (VLHFGAGNIGRG) is a binding site for NAD(+).

This sequence belongs to the mannitol dehydrogenase family.

It carries out the reaction D-mannitol 1-phosphate + NAD(+) = beta-D-fructose 6-phosphate + NADH + H(+). The polypeptide is Mannitol-1-phosphate 5-dehydrogenase (mtlD) (Mycoplasma pneumoniae (strain ATCC 29342 / M129 / Subtype 1) (Mycoplasmoides pneumoniae)).